A 2476-amino-acid polypeptide reads, in one-letter code: Zonadhesin (2476 aa).

The first 29 residues, 1–29 (MLGLPALAGPMAMPHPPLIPSTPTLLAFS), serve as a signal peptide directing secretion. At 30 to 2418 (FPGGFYMLLD…SPKKPEASNR (2389 aa)) the chain is on the extracellular side. MAM domains are found at residues 31 to 144 (PGGF…PCEE) and 147 to 312 (PQCD…TCRG). Residues N109 and N269 are each glycosylated (N-linked (GlcNAc...) asparagine). Disordered stretches follow at residues 313–332 (PSET…KPTV), 358–462 (PTVP…TERT), and 537–632 (ERTT…RTTI). The segment at 319-687 (STEKPVAPTE…ATTVTPRTTI (369 aa)) is 53 X approximate heptapeptide repeats (mucin-like domain). Positions 358-373 (PTVPTEKPTIPTEKST) are enriched in low complexity. The span at 400–412 (TTPPEGPAVPPKG) shows a compositional bias: pro residues. Residues 423–433 (HTEKSTVHTEK) show a composition bias toward basic and acidic residues. Residues 451 to 462 (PTKRTTTPTERT) are compositionally biased toward low complexity. The region spanning 690-739 (CPPNAHFERCACPVSCQSPTPNCELFCKPGCVCDPGFLFSGSHCVNASSC) is the TIL 1 domain. N735, N758, and N833 each carry an N-linked (GlcNAc...) asparagine glycan. Residues 740–794 (DCFYNDNYYKLGTDWFSPNCTEHCHCRPSSRMECQTFKCGTHTVCQLKNGQYGCH) enclose the VWFC 1 domain. In terms of domain architecture, VWFD 1 spans 799-976 (ATCSVYGDPH…TSEDADQQCE (178 aa)). 2 cysteine pairs are disulfide-bonded: C801/C936 and C823/C975. Residues 943–983 (SSNDNQKPDGSPAKDEKELGSSWQTSEDADQQCEENQVSPP) form a disordered region. Positions 1070–1123 (CPRNSRYTLCARLCPDTCHSEFSGRACKDRCVEGCECDPGFVLSGLQCVSRSEC) constitute a TIL 2 domain. The VWFC 2 domain maps to 1124-1180 (GCLDSTAGYVKVGERWFKPGCRQLCICEGNNRTRCVLWRCQAQEFCGQQDGIYGCHA). N1154 carries an N-linked (GlcNAc...) asparagine glycan. The 181-residue stretch at 1184–1364 (ATCTVSGDPH…INELSEPGCF (181 aa)) folds into the VWFD 2 domain. 2 cysteine pairs are disulfide-bonded: C1186–C1324 and C1208–C1363. N1329 and N1448 each carry an N-linked (GlcNAc...) asparagine glycan. The region spanning 1456–1511 (CPSGSSYSTCANPCPATCLSLNNPSYCPSTLPCAEGCECQKGHILSGTSCVPLSQC) is the TIL 3 domain. One can recognise a VWFC 3 domain in the interval 1512–1568 (GCTTQRGSYHPVGESWYTDNSCSRLCTCSAHNNISCRQASCKPSQMCWPQDGLIRCR). 3 N-linked (GlcNAc...) asparagine glycosylation sites follow: N1544, N1596, and N1654. One can recognise a VWFD 3 domain in the interval 1573-1751 (GVCRIPDTSH…RDKEIDPNCQ (179 aa)). Cystine bridges form between C1575-C1712 and C1597-C1750. Basic and acidic residues predominate over residues 1747–1759 (DPNCQEDDRKTEA). The tract at residues 1747-1768 (DPNCQEDDRKTEAESQEQPSAN) is disordered. N-linked (GlcNAc...) asparagine glycosylation occurs at N1843. Positions 1851–1907 (CSAHSVYTSCVPSCLPSCQDPEGQCTGAGAPSTCEEGCICEPGYVLSEQQCVARSQC) constitute a TIL 4 domain. Positions 1908–1963 (GCRDARGTFLPVGRFRLSSGCSQMCVCTAGAIECRPFTCPSGSQCEPNEDGKDFCQ) constitute a VWFC 4 domain. An N-linked (GlcNAc...) asparagine glycan is attached at N1965. A VWFD 4 domain is found at 1968–2145 (NLCSVFGDPH…WEVKAKEGHP (178 aa)). C1970 and C2107 are joined by a disulfide. N-linked (GlcNAc...) asparagine glycosylation is found at N2122, N2165, and N2178. Residues 2257–2310 (CPANTVYQSCMTPCPASCATLAVPRACDGPCVEGCASLPGYIYSGAQSLPMAHC) form the TIL 5 domain. The VWFC 5 domain occupies 2311 to 2365 (GCTNNGVYYQQGDSFVTENCSQRCTCASSGVLLCEPLSCRPGEICTLGNLTRGCF). 2 N-linked (GlcNAc...) asparagine glycosylation sites follow: N2329 and N2359. The region spanning 2366–2402 (RDSPCLQNPCQNDGRCREQGTHFTCECELGYGGDLCT) is the EGF-like domain. 3 disulfide bridges follow: C2370–C2381, C2375–C2390, and C2392–C2401. The helical transmembrane segment at 2419-2439 (VAILLGMLMPTVLLVPAVTRV) threads the bilayer. A disordered region spans residues 2438-2476 (RVSRKRRRRRRPSRERTQSQNRGKRAGTDCAPEQAYKVA). The span at 2439 to 2450 (VSRKRRRRRRPS) shows a compositional bias: basic residues. The Cytoplasmic portion of the chain corresponds to 2440 to 2476 (SRKRRRRRRPSRERTQSQNRGKRAGTDCAPEQAYKVA).

Probably forms covalent oligomers. In terms of processing, the MAM domains and the mucin-like domains are missing from the zonadhesin that binds to the egg extracellular matrix. Processing might occur during sperm maturation and/or capacitation. In terms of tissue distribution, in testis, primarily in haploid spermatids. Not in lung, liver, heart, spleen, brain, kidney, epididymis.

Its subcellular location is the cell membrane. Functionally, binds in a species-specific manner to the zona pellucida of the egg. May be involved in gamete recognition and/or signaling. The chain is Zonadhesin (ZAN) from Sus scrofa (Pig).